The chain runs to 1165 residues: Phenyloxazoline synthase MbtB (1165 aa).

Residues 5–78 form the Carrier 1 domain; the sequence is PARSEDIREE…AWAQLVTAGR (74 aa). An O-(pantetheine 4'-phosphoryl)serine modification is found at Ser-39. The interval 77–100 is disordered; that stretch reads GRQDTDSAAPPADSSGDPSGETEP. Residues 97–393 form a condensation/cyclization region; sequence ETEPFALAPM…SSLLLDVDLV (297 aa). The segment at 578-973 is adenylation; it reads SYAQLRDQAL…RVPGVRTAVA (396 aa). The region spanning 1055 to 1131 is the Carrier 2 domain; it reads AASTPLEGAL…ALAAVLRAAE (77 aa). Residue Ser-1090 is modified to O-(pantetheine 4'-phosphoryl)serine.

It belongs to the ATP-dependent AMP-binding enzyme family. MbtB subfamily. Pantetheine 4'-phosphate is required as a cofactor. Post-translationally, 4'-phosphopantetheine is transferred from CoA to a specific serine in each of the two carrier protein domains, leading to their activation from apo to holo forms.

Its pathway is siderophore biosynthesis; mycobactin biosynthesis. In terms of biological role, involved in the initial steps of the mycobactin biosynthetic pathway. Putatively couples activated salicylic acid with serine or threonine and cyclizes this precursor to the hydroxyphenyloxazoline ring system present in this class of siderophores. This Mycolicibacterium paratuberculosis (strain ATCC BAA-968 / K-10) (Mycobacterium paratuberculosis) protein is Phenyloxazoline synthase MbtB (mbtB).